We begin with the raw amino-acid sequence, 535 residues long: MCLEPISLVVFGSLVFFFGLVKYFKRGERQRTRGILQPEYKDKYYYSKEKGEEMGEVANVNEIPVKIRNHKYPAKEHNLRVKDLLLNRNPKLSKISTAFFIAGEELEGNKYCDTNKDFRQNRYFYHLSGVDIPASAILFNCSTDKLTLFLPNIDEEDVIWSGMPLSLDEAMRVFDIDEALYISDLGKKFKELQDFAIFTTDLDNVHDENIARSLIPSDPNFFYAMDETRAIKDWYEIESIRKACQISDKSHLAVMSALPIELNELQIQAEFEYHATRQGGRSLGYDPICCSGPACGTLHYVKNSEDIKGKHSILIDAGAEWRQYTSDITRCFPTSGKFTAEHREVYETVLDMQNQAMERIKPGAKWDDLHALTHKVLIKHFLSMGIFKKEFSEDEIFKRRASCAFYPHGLGHMLGLDVHDVGGNPNYDDPDPMFRYLRIRRPLKENMVITNEPGCYFNQFLIKEFLEKHPERLEVVDMSVLKRYMYVGGVRIEDDILVTKDGYENLTGITSDPDEIEKIVQKGLKKPRSGFHVIV.

A helical membrane pass occupies residues 8-24 (LVVFGSLVFFFGLVKYF). K50 participates in a covalent cross-link: Glycyl lysine isopeptide (Lys-Gly) (interchain with G-Cter in ubiquitin). Residues D316, D327, H412, E452, and E493 each contribute to the Mn(2+) site.

It belongs to the peptidase M24B family. The cofactor is Mn(2+).

It localises to the membrane. This is an uncharacterized protein from Saccharomyces cerevisiae (strain ATCC 204508 / S288c) (Baker's yeast).